The chain runs to 85 residues: Large ribosomal subunit protein bL27 (85 aa).

Residues 1-22 (MAHKKAGGSTRNGRDSESKRLG) are disordered.

This sequence belongs to the bacterial ribosomal protein bL27 family.

The polypeptide is Large ribosomal subunit protein bL27 (Vibrio vulnificus (strain CMCP6)).